A 487-amino-acid chain; its full sequence is Betaine aldehyde dehydrogenase (487 aa).

The K(+) site is built by Ile27 and Asp93. Residue 149-151 participates in NAD(+) binding; it reads GAW. Residue Lys161 is the Charge relay system of the active site. NAD(+)-binding positions include 175–178 and 228–231; these read KPSE and SVPT. Leu243 contributes to the K(+) binding site. Glu249 serves as the catalytic Proton acceptor. NAD(+) contacts are provided by Gly251, Cys283, and Glu384. Residue Cys283 is the Nucleophile of the active site. Cys283 carries the cysteine sulfenic acid (-SOH) modification. K(+)-binding residues include Lys454 and Gly457. Glu461 serves as the catalytic Charge relay system.

It belongs to the aldehyde dehydrogenase family. Dimer of dimers. K(+) is required as a cofactor.

The catalysed reaction is betaine aldehyde + NAD(+) + H2O = glycine betaine + NADH + 2 H(+). It participates in amine and polyamine biosynthesis; betaine biosynthesis via choline pathway; betaine from betaine aldehyde: step 1/1. Functionally, involved in the biosynthesis of the osmoprotectant glycine betaine. Catalyzes the irreversible oxidation of betaine aldehyde to the corresponding acid. This Brucella suis (strain ATCC 23445 / NCTC 10510) protein is Betaine aldehyde dehydrogenase.